A 765-amino-acid polypeptide reads, in one-letter code: Spastin (765 aa).

The disordered stretch occupies residues 1–94 (MVRTKNQSSS…TSGYGPRGGT (94 aa)). Topologically, residues 1–107 (MVRTKNQSSS…KQNLYVVSFP (107 aa)) are cytoplasmic. The interval 1–195 (MVRTKNQSSS…ALLPLEMATN (195 aa)) is required for localization to punctate cytoplasmic foci. Residues 8–19 (SSSSSASSSTKS) are compositionally biased toward low complexity. The span at 48 to 58 (SSKLSSNRQRA) shows a compositional bias: polar residues. Positions 59–72 (TITTTTTSTTPGSS) are enriched in low complexity. Residues 108–128 (IIFLFNVLRSLIYQLFCIFRY) constitute an intramembrane region (helical). Topologically, residues 129–765 (LYCASTKVIY…WSQDYGDITI (637 aa)) are cytoplasmic. The segment at 193–765 (ATNRGGSGGY…WSQDYGDITI (573 aa)) is sufficient for interaction with microtubules and microtubule severing. The 76-residue stretch at 218–293 (HRRAFEYISK…SMARDRLHFL (76 aa)) folds into the MIT domain. The segment at 329–462 (QTNSKAAAVE…GSGSGASTPM (134 aa)) is disordered. Over residues 355–364 (SGTGSSAGTS) the composition is skewed to low complexity. 2 stretches are compositionally biased toward polar residues: residues 389-407 (NKSQ…STSV) and 428-444 (QFSS…RTPI). The segment at 446–462 (NNAASGSGSGSGASTPM) is required for interaction with microtubules. Position 530–537 (530–537 (GPPGNGKT)) interacts with ATP.

Belongs to the AAA ATPase family. Spastin subfamily. In terms of assembly, homohexamer. The homohexamer is stabilized by ATP-binding. The homohexamer may adopt a ring conformation through which microtubules pass prior to being severed. Interacts with microtubules. Interacts with atl; may be involved in microtubule dynamics.

The protein localises to the membrane. The protein resides in the cytoplasm. Its subcellular location is the cytoskeleton. It is found in the microtubule organizing center. It localises to the centrosome. The protein localises to the chromosome. The protein resides in the lipid droplet. The catalysed reaction is n ATP + n H2O + a microtubule = n ADP + n phosphate + (n+1) alpha/beta tubulin heterodimers.. Functionally, ATP-dependent microtubule severing protein. Stimulates microtubule minus-end depolymerization and poleward microtubule flux in the mitotic spindle. Regulates microtubule stability in the neuromuscular junction synapse. Involved in lipid metabolism by regulating the size and distribution of lipid droplets. Involved in axon regeneration by regulating microtubule severing. The chain is Spastin from Drosophila mojavensis (Fruit fly).